The primary structure comprises 425 residues: Histidine--tRNA ligase (425 aa).

It belongs to the class-II aminoacyl-tRNA synthetase family. Homodimer.

It localises to the cytoplasm. The enzyme catalyses tRNA(His) + L-histidine + ATP = L-histidyl-tRNA(His) + AMP + diphosphate + H(+). The sequence is that of Histidine--tRNA ligase from Chlorobium chlorochromatii (strain CaD3).